The primary structure comprises 80 residues: MINLWMFLALCIVCVSGYIGQVLNVVSAVSSFFGMVILAALIYYFTMWLTGGNELVTGIFMFLAPACGLMIRFMVGYGRR.

Helical transmembrane passes span 2 to 22, 32 to 52, and 55 to 75; these read INLW…IGQV, FFGM…LTGG, and LVTG…RFMV.

The protein localises to the cell membrane. This is an uncharacterized protein from Escherichia coli (strain K12).